The following is a 144-amino-acid chain: Transcription antitermination protein NusB (144 aa).

Belongs to the NusB family.

Its function is as follows. Involved in transcription antitermination. Required for transcription of ribosomal RNA (rRNA) genes. Binds specifically to the boxA antiterminator sequence of the ribosomal RNA (rrn) operons. The chain is Transcription antitermination protein NusB from Pelotomaculum thermopropionicum (strain DSM 13744 / JCM 10971 / SI).